The primary structure comprises 463 residues: L-seryl-tRNA(Sec) selenium transferase (463 aa).

The residue at position 295 (lysine 295) is an N6-(pyridoxal phosphate)lysine.

The protein belongs to the SelA family. As to quaternary structure, homodecamer; pentamer of dimers. Binds only one seryl-tRNA(Sec) per dimer. Pyridoxal 5'-phosphate is required as a cofactor.

It is found in the cytoplasm. The enzyme catalyses L-seryl-tRNA(Sec) + selenophosphate + H(+) = L-selenocysteinyl-tRNA(Sec) + phosphate. The protein operates within aminoacyl-tRNA biosynthesis; selenocysteinyl-tRNA(Sec) biosynthesis; selenocysteinyl-tRNA(Sec) from L-seryl-tRNA(Sec) (bacterial route): step 1/1. Its function is as follows. Converts seryl-tRNA(Sec) to selenocysteinyl-tRNA(Sec) required for selenoprotein biosynthesis. In Escherichia coli O81 (strain ED1a), this protein is L-seryl-tRNA(Sec) selenium transferase.